A 221-amino-acid chain; its full sequence is Serine/arginine-rich splicing factor 9 (221 aa).

RRM domains follow at residues 14 to 89 and 111 to 187; these read GRIY…FPRA and FRVL…PERG. A Glycyl lysine isopeptide (Lys-Gly) (interchain with G-Cter in SUMO2) cross-link involves residue K36. Residues 187–198 show a composition bias toward low complexity; it reads GTSYGCSRSRSG. Residues 187 to 221 form a disordered region; that stretch reads GTSYGCSRSRSGSRGRDSPYQSRGSPHYFSPFRPY. Residues 188–200 are interaction with SAFB1; sequence TSYGCSRSRSGSR. Phosphoserine is present on residues S189, S193, S195, S204, S208, and S211. At Y214 the chain carries Phosphotyrosine. Position 216 is a phosphoserine (S216).

This sequence belongs to the splicing factor SR family. In terms of assembly, interacts with KHDRBS3. Interacts with HABP4. Interacts with NOL3/ARC/NOP30. Interacts with NSEP1/YB-1/YB1. Interacts with SAFB/SAFB1. Interacts with SRSF6/SFRS6. Interacts with TRA2B/SFRS10. Interacts with C1QBP. May also interact with DUSP11/PIR1. Extensively phosphorylated on serine residues in the RS domain.

It localises to the nucleus. Its function is as follows. Plays a role in constitutive splicing and can modulate the selection of alternative splice sites. Represses the splicing of MAPT/Tau exon 10. This is Serine/arginine-rich splicing factor 9 (Srsf9) from Rattus norvegicus (Rat).